A 56-amino-acid chain; its full sequence is Small ribosomal subunit protein uS14 (56 aa).

The protein belongs to the universal ribosomal protein uS14 family.

The sequence is that of Small ribosomal subunit protein uS14 (RPS29) from Kluyveromyces lactis (strain ATCC 8585 / CBS 2359 / DSM 70799 / NBRC 1267 / NRRL Y-1140 / WM37) (Yeast).